The following is a 180-amino-acid chain: Trafficking protein particle complex subunit 3 (180 aa).

The S-palmitoyl cysteine moiety is linked to residue Cys-68.

It belongs to the TRAPP small subunits family. BET3 subfamily. As to quaternary structure, homodimer. Part of the multisubunit TRAPP (transport protein particle) complex.

It is found in the golgi apparatus. It localises to the cis-Golgi network. Its subcellular location is the endoplasmic reticulum. Its function is as follows. May play a role in vesicular transport from endoplasmic reticulum to Golgi. This Gallus gallus (Chicken) protein is Trafficking protein particle complex subunit 3 (TRAPPC3).